A 46-amino-acid chain; its full sequence is Antimicrobial peptide eNAP-1 (46 aa).

Cystine bridges form between C4–C16 and C10–C26.

This sequence belongs to the granulin family.

It is found in the secreted. Its function is as follows. Has antimicrobial activity against Gram-negative and Gram-positive bacteria. In Equus caballus (Horse), this protein is Antimicrobial peptide eNAP-1.